The following is a 299-amino-acid chain: Bifunctional protein FolD (299 aa).

NADP(+) is bound by residues 168–170 (GRS), serine 193, and isoleucine 234.

The protein belongs to the tetrahydrofolate dehydrogenase/cyclohydrolase family. As to quaternary structure, homodimer.

It carries out the reaction (6R)-5,10-methylene-5,6,7,8-tetrahydrofolate + NADP(+) = (6R)-5,10-methenyltetrahydrofolate + NADPH. The catalysed reaction is (6R)-5,10-methenyltetrahydrofolate + H2O = (6R)-10-formyltetrahydrofolate + H(+). The protein operates within one-carbon metabolism; tetrahydrofolate interconversion. In terms of biological role, catalyzes the oxidation of 5,10-methylenetetrahydrofolate to 5,10-methenyltetrahydrofolate and then the hydrolysis of 5,10-methenyltetrahydrofolate to 10-formyltetrahydrofolate. The protein is Bifunctional protein FolD of Bartonella quintana (strain Toulouse) (Rochalimaea quintana).